Reading from the N-terminus, the 94-residue chain is Defensin-7 (94 aa).

Residues 1–19 form the signal peptide; that stretch reads MRTLTLLSAFLLVALQAWA. 2 disulfides stabilise this stretch: Cys65/Cys93 and Cys72/Cys92.

Belongs to the alpha-defensin family.

The protein resides in the secreted. In terms of biological role, has antimicrobial activity. This Pan troglodytes (Chimpanzee) protein is Defensin-7 (DEFA7).